A 348-amino-acid chain; its full sequence is Dihydroorotate dehydrogenase (quinone) (348 aa).

FMN-binding positions include 65 to 69 (AGMDK) and Thr-89. Lys-69 serves as a coordination point for substrate. 114-118 (NRMGF) serves as a coordination point for substrate. Asn-143 and Asn-176 together coordinate FMN. Asn-176 is a binding site for substrate. Ser-179 acts as the Nucleophile in catalysis. A substrate-binding site is contributed by Asn-181. FMN is bound by residues Lys-221 and Thr-249. Position 250 to 251 (250 to 251 (NT)) interacts with substrate. FMN is bound by residues Gly-272, Gly-301, and 322 to 323 (YT).

The protein belongs to the dihydroorotate dehydrogenase family. Type 2 subfamily. As to quaternary structure, monomer. The cofactor is FMN.

The protein resides in the cell membrane. It carries out the reaction (S)-dihydroorotate + a quinone = orotate + a quinol. It participates in pyrimidine metabolism; UMP biosynthesis via de novo pathway; orotate from (S)-dihydroorotate (quinone route): step 1/1. Functionally, catalyzes the conversion of dihydroorotate to orotate with quinone as electron acceptor. The sequence is that of Dihydroorotate dehydrogenase (quinone) from Akkermansia muciniphila (strain ATCC BAA-835 / DSM 22959 / JCM 33894 / BCRC 81048 / CCUG 64013 / CIP 107961 / Muc).